Consider the following 213-residue polypeptide: Protein arginine N-methyltransferase SFM1 (213 aa).

Residues S204 and S207 each carry the phosphoserine modification.

This sequence belongs to the class IV-like SAM-binding methyltransferase superfamily. Protein arginine N-methyltransferase SFM1 family.

The protein localises to the cytoplasm. Functionally, S-adenosyl-L-methionine-dependent protein-arginine N-methyltransferase that monomethylates ribosomal protein S3 (RPS3) at 'Arg-146'. The protein is Protein arginine N-methyltransferase SFM1 of Saccharomyces cerevisiae (strain ATCC 204508 / S288c) (Baker's yeast).